A 508-amino-acid polypeptide reads, in one-letter code: UDP-N-acetylmuramoyl-L-alanyl-D-glutamate--2,6-diaminopimelate ligase (508 aa).

UDP-N-acetyl-alpha-D-muramoyl-L-alanyl-D-glutamate is bound at residue Ser33. Residue 121 to 127 (GTNGKST) coordinates ATP. Residues Asn162, 163 to 164 (TT), Ser190, Gln196, and Arg198 contribute to the UDP-N-acetyl-alpha-D-muramoyl-L-alanyl-D-glutamate site. Lys230 is subject to N6-carboxylysine. Residues Arg399, 423–426 (DNPR), Gly474, and Glu478 each bind meso-2,6-diaminopimelate. The short motif at 423–426 (DNPR) is the Meso-diaminopimelate recognition motif element.

This sequence belongs to the MurCDEF family. MurE subfamily. The cofactor is Mg(2+). Carboxylation is probably crucial for Mg(2+) binding and, consequently, for the gamma-phosphate positioning of ATP.

The protein resides in the cytoplasm. It catalyses the reaction UDP-N-acetyl-alpha-D-muramoyl-L-alanyl-D-glutamate + meso-2,6-diaminopimelate + ATP = UDP-N-acetyl-alpha-D-muramoyl-L-alanyl-gamma-D-glutamyl-meso-2,6-diaminopimelate + ADP + phosphate + H(+). The protein operates within cell wall biogenesis; peptidoglycan biosynthesis. Catalyzes the addition of meso-diaminopimelic acid to the nucleotide precursor UDP-N-acetylmuramoyl-L-alanyl-D-glutamate (UMAG) in the biosynthesis of bacterial cell-wall peptidoglycan. The protein is UDP-N-acetylmuramoyl-L-alanyl-D-glutamate--2,6-diaminopimelate ligase of Buchnera aphidicola subsp. Baizongia pistaciae (strain Bp).